Consider the following 172-residue polypeptide: Adenylate kinase isoenzyme 6 (172 aa).

5 residues coordinate ATP: G13, G15, K16, T17, and T18. Residues 33-56 (NVGDLAREGHLYDGYDEEYGCPIL) are NMPbind. Residues 108-118 (TRGYHEKKLQD) form an LID region. An ATP-binding site is contributed by R109.

It belongs to the adenylate kinase family. AK6 subfamily. Monomer and homodimer. Interacts with small ribosomal subunit protein uS11. Not a structural component of 43S pre-ribosomes, but transiently interacts with them by binding to uS11. Interacts with COIL (via C-terminus).

It localises to the cytoplasm. It is found in the nucleus. The protein localises to the nucleoplasm. The protein resides in the cajal body. The catalysed reaction is AMP + ATP = 2 ADP. It carries out the reaction ATP + H2O = ADP + phosphate + H(+). In terms of biological role, broad-specificity nucleoside monophosphate (NMP) kinase that catalyzes the reversible transfer of the terminal phosphate group between nucleoside triphosphates and monophosphates. Also has ATPase activity. Involved in the late cytoplasmic maturation steps of the 40S ribosomal particles, specifically 18S rRNA maturation. While NMP activity is not required for ribosome maturation, ATPase activity is. Associates transiently with small ribosomal subunit protein uS11. ATP hydrolysis breaks the interaction with uS11. May temporarily remove uS11 from the ribosome to enable a conformational change of the ribosomal RNA that is needed for the final maturation step of the small ribosomal subunit. Its NMP activity may have a role in nuclear energy homeostasis. May be involved in regulation of Cajal body (CB) formation. In Rattus norvegicus (Rat), this protein is Adenylate kinase isoenzyme 6.